A 574-amino-acid chain; its full sequence is Fusion glycoprotein F0 (574 aa).

A signal peptide spans 1 to 25 (MATTAMRMIISIIFISTYVTHITLC). Residues 26-524 (QNITEEFYQS…SVDVGKSTTN (499 aa)) lie on the Extracellular side of the membrane. 2 N-linked (GlcNAc...) asparagine; by host glycosylation sites follow: Asn-27 and Asn-70. Intrachain disulfides connect Cys-37/Cys-439, Cys-69/Cys-212, Cys-313/Cys-343, Cys-322/Cys-333, Cys-358/Cys-367, Cys-382/Cys-393, and Cys-416/Cys-422. The stretch at 76–96 (VKLIKQELERYNNAVVELQSL) forms a coiled coil. Asn-120 carries N-linked (GlcNAc...) asparagine; by host glycosylation. Residues 137–157 (FLGFLLGIGSAIASGVAVSKV) are fusion peptide. A coiled-coil region spans residues 158–209 (LHLEGEVNKIKNALLSTNKAVVSLSNGVSVLTSKVLDLKNYIDKELLPKVNN). Residues 481 to 516 (LVFPSDEFDASIAQVNAKINQSLAFIRRSDELLHSV) adopt a coiled-coil conformation. N-linked (GlcNAc...) asparagine; by host glycosylation is present at Asn-500. Residues 525 to 550 (VVITTIIIVIVVVILMLIAVGLLFYS) traverse the membrane as a helical segment. Over 551 to 574 (KTRSTPIMLGKDQLSGINNLSFSK) the chain is Cytoplasmic.

The protein belongs to the paramyxoviruses fusion glycoprotein family. As to quaternary structure, homotrimer. Heterodimer with fusion protein F2; disulfide-linked. Part of a complex composed of F1, F2 and G glycoproteins. As a heterodimer with F2, interacts with host RHOA; this interaction facilitates virus-induced syncytium formation. Homotrimer. Heterodimer with fusion protein F1; disulfide-linked. Part of a complex composed of F1, F2 and G glycoproteins. As a heterodimer with F1, interacts with host RHOA; this interaction facilitates virus-induced syncytium formation. In terms of processing, the F glycoprotein is synthesized as a F0 inactive precursor that is heavily N-glycosylated and processed at two sites by a host furin-like protease probably in the Golgi. The cleavage site between p27 and F1 may occur after endocytosis to yield the mature F1 and F2 proteins. Both cleavages are required for membrane fusion and p27 is released from the processed protein.

It localises to the host Golgi apparatus membrane. Its subcellular location is the virion membrane. It is found in the host cell membrane. Inactive precursor that is cleaved at two sites by a furin-like protease to give rise to the mature F1 and F2 fusion glycoproteins. Functionally, class I viral fusion protein. Under the current model, the protein has at least 3 conformational states: pre-fusion native state, pre-hairpin intermediate state, and post-fusion hairpin state. During viral and plasma cell membrane fusion, the coiled coil regions assume a trimer-of-hairpins structure, positioning the fusion peptide in close proximity to the C-terminal region of the ectodomain. The formation of this structure appears to drive apposition and subsequent fusion of viral and cellular membranes leading to delivery of the nucleocapsid into the cytoplasm. This fusion is pH independent and occurs at the plasma or endosomal membrane. The trimer of F1-F2 (F protein) also facilitates the attachment and entry into the host cell. Later in infection, F protein expressed at the plasma membrane of infected cells can mediate fusion with adjacent cells to form syncytia, a cytopathic effect that could lead to tissue necrosis. Its function is as follows. Major determinant of the species specificity of RSV infection. The trimer of F1-F2 (F protein) also facilitates the attachment and entry into the host cell. Later in infection, F protein expressed at the plasma membrane of infected cells can mediate fusion with adjacent cells to form syncytia, a cytopathic effect that could lead to tissue necrosis. The protein is Fusion glycoprotein F0 (F) of Bos taurus (Bovine).